The sequence spans 119 residues: Large ribosomal subunit protein bL19 (119 aa).

Belongs to the bacterial ribosomal protein bL19 family.

In terms of biological role, this protein is located at the 30S-50S ribosomal subunit interface and may play a role in the structure and function of the aminoacyl-tRNA binding site. The chain is Large ribosomal subunit protein bL19 from Idiomarina loihiensis (strain ATCC BAA-735 / DSM 15497 / L2-TR).